A 213-amino-acid chain; its full sequence is Protein-L-isoaspartate O-methyltransferase (213 aa).

Serine 62 is a catalytic residue.

The protein belongs to the methyltransferase superfamily. L-isoaspartyl/D-aspartyl protein methyltransferase family.

It is found in the cytoplasm. The enzyme catalyses [protein]-L-isoaspartate + S-adenosyl-L-methionine = [protein]-L-isoaspartate alpha-methyl ester + S-adenosyl-L-homocysteine. In terms of biological role, catalyzes the methyl esterification of L-isoaspartyl residues in peptides and proteins that result from spontaneous decomposition of normal L-aspartyl and L-asparaginyl residues. It plays a role in the repair and/or degradation of damaged proteins. This is Protein-L-isoaspartate O-methyltransferase from Desulfovibrio desulfuricans (strain ATCC 27774 / DSM 6949 / MB).